A 644-amino-acid polypeptide reads, in one-letter code: Beta-mannosyltransferase 2 (644 aa).

Residues 1–6 (MRTRLN) are Cytoplasmic-facing. A helical transmembrane segment spans residues 7–27 (FLLLCIASVLSVIWIGVLLTW). Over 28–644 (NDNNLGGISL…NDKKDLKIRQ (617 aa)) the chain is Extracellular. N-linked (GlcNAc...) asparagine glycosylation is present at Asn-484. Positions 512–644 (TRGEAERRRR…NDKKDLKIRQ (133 aa)) form a coiled coil. Residues 517–644 (ERRRRVAEER…NDKKDLKIRQ (128 aa)) form a disordered region.

It belongs to the BMT family.

Its subcellular location is the membrane. Its function is as follows. Beta-mannosyltransferase involved in cell wall biosynthesis. Initiates the beta-mannosylation of core N-linked glycans. In Komagataella phaffii (strain GS115 / ATCC 20864) (Yeast), this protein is Beta-mannosyltransferase 2 (BMT2).